The sequence spans 655 residues: tRNA uridine 5-carboxymethylaminomethyl modification enzyme MnmG (655 aa).

Residue 13-18 (GGGHAG) coordinates FAD. 281–295 (GPRYCPSVEDKINRF) is a binding site for NAD(+).

It belongs to the MnmG family. In terms of assembly, homodimer. Heterotetramer of two MnmE and two MnmG subunits. Requires FAD as cofactor.

The protein resides in the cytoplasm. Its function is as follows. NAD-binding protein involved in the addition of a carboxymethylaminomethyl (cmnm) group at the wobble position (U34) of certain tRNAs, forming tRNA-cmnm(5)s(2)U34. This is tRNA uridine 5-carboxymethylaminomethyl modification enzyme MnmG from Paracidovorax citrulli (strain AAC00-1) (Acidovorax citrulli).